Reading from the N-terminus, the 467-residue chain is UDP-N-acetylmuramate--L-alanine ligase (467 aa).

Gly112–Thr118 lines the ATP pocket.

Belongs to the MurCDEF family.

Its subcellular location is the cytoplasm. The catalysed reaction is UDP-N-acetyl-alpha-D-muramate + L-alanine + ATP = UDP-N-acetyl-alpha-D-muramoyl-L-alanine + ADP + phosphate + H(+). It participates in cell wall biogenesis; peptidoglycan biosynthesis. Functionally, cell wall formation. The protein is UDP-N-acetylmuramate--L-alanine ligase of Paraburkholderia xenovorans (strain LB400).